A 289-amino-acid polypeptide reads, in one-letter code: uncharacterized protein (289 aa).

This is an uncharacterized protein from Drosophila melanogaster (Fruit fly).